Here is a 228-residue protein sequence, read N- to C-terminus: Ribose-5-phosphate isomerase A (228 aa).

Substrate contacts are provided by residues 32-35, 85-88, and 98-101; these read TGST, DGAD, and KGGG. E107 serves as the catalytic Proton acceptor. K125 contributes to the substrate binding site.

It belongs to the ribose 5-phosphate isomerase family. Homodimer.

The catalysed reaction is aldehydo-D-ribose 5-phosphate = D-ribulose 5-phosphate. It functions in the pathway carbohydrate degradation; pentose phosphate pathway; D-ribose 5-phosphate from D-ribulose 5-phosphate (non-oxidative stage): step 1/1. Functionally, catalyzes the reversible conversion of ribose-5-phosphate to ribulose 5-phosphate. The protein is Ribose-5-phosphate isomerase A of Ralstonia pickettii (strain 12J).